The primary structure comprises 281 residues: NAD-dependent protein deacetylase 3 (281 aa).

The region spanning 1–281 (MLDSPTLDLL…PWLAEQLITR (281 aa)) is the Deacetylase sirtuin-type domain. Residues 27 to 47 (GAGISTASGIPDYRDKDGVRR) and 105 to 108 (QNVD) each bind NAD(+). The active-site Proton acceptor is the His123. Zn(2+) contacts are provided by Cys131, Cys134, Cys182, and Cys185. Residues 223–225 (GTS), 249–251 (NHG), and Cys267 each bind NAD(+).

Belongs to the sirtuin family. Class II subfamily. It depends on Zn(2+) as a cofactor.

Its subcellular location is the cytoplasm. The enzyme catalyses N(6)-acetyl-L-lysyl-[protein] + NAD(+) + H2O = 2''-O-acetyl-ADP-D-ribose + nicotinamide + L-lysyl-[protein]. Functionally, NAD-dependent protein deacetylase which modulates the activities of several enzymes which are inactive in their acetylated form. This is NAD-dependent protein deacetylase 3 from Pseudomonas syringae pv. tomato (strain ATCC BAA-871 / DC3000).